Consider the following 224-residue polypeptide: UPF0758 protein VF_0126 (224 aa).

The 123-residue stretch at 102–224 (ALTSPEHTKR…IVSFAERGWI (123 aa)) folds into the MPN domain. The Zn(2+) site is built by His173, His175, and Asp186. Residues 173–186 (HNHPSGVAEPSQAD) carry the JAMM motif motif.

This sequence belongs to the UPF0758 family.

This Aliivibrio fischeri (strain ATCC 700601 / ES114) (Vibrio fischeri) protein is UPF0758 protein VF_0126.